The primary structure comprises 1373 residues: DNA-directed RNA polymerase subunit beta (1373 aa).

The protein belongs to the RNA polymerase beta chain family. In terms of assembly, the RNAP catalytic core consists of 2 alpha, 1 beta, 1 beta' and 1 omega subunit. When a sigma factor is associated with the core the holoenzyme is formed, which can initiate transcription.

The catalysed reaction is RNA(n) + a ribonucleoside 5'-triphosphate = RNA(n+1) + diphosphate. Functionally, DNA-dependent RNA polymerase catalyzes the transcription of DNA into RNA using the four ribonucleoside triphosphates as substrates. This Rickettsia canadensis (strain McKiel) protein is DNA-directed RNA polymerase subunit beta.